The following is a 327-amino-acid chain: Probable cell division protein WhiA (327 aa).

A DNA-binding region (H-T-H motif) is located at residues 275–308 (SLEELGQLADPPMTKDAVAGRIRRLLSMADRRAR).

This sequence belongs to the WhiA family.

In terms of biological role, involved in cell division and chromosome segregation. This Nocardia farcinica (strain IFM 10152) protein is Probable cell division protein WhiA.